Consider the following 465-residue polypeptide: Probable dipeptidase A (465 aa).

The active site involves cysteine 3.

Belongs to the peptidase C69 family.

It catalyses the reaction an L-aminoacyl-L-amino acid + H2O = 2 an L-alpha-amino acid. In Streptococcus pyogenes serotype M3 (strain SSI-1), this protein is Probable dipeptidase A (pepDA).